A 177-amino-acid chain; its full sequence is Large ribosomal subunit protein uL6 (177 aa).

The protein belongs to the universal ribosomal protein uL6 family. Part of the 50S ribosomal subunit.

Its function is as follows. This protein binds to the 23S rRNA, and is important in its secondary structure. It is located near the subunit interface in the base of the L7/L12 stalk, and near the tRNA binding site of the peptidyltransferase center. In Leptothrix cholodnii (strain ATCC 51168 / LMG 8142 / SP-6) (Leptothrix discophora (strain SP-6)), this protein is Large ribosomal subunit protein uL6.